Consider the following 270-residue polypeptide: 4-hydroxy-tetrahydrodipicolinate reductase (270 aa).

NAD(+) is bound by residues 11 to 16 (GAGGRM) and Glu37. NADP(+) is bound at residue Arg38. NAD(+) contacts are provided by residues 101 to 103 (GTT) and 125 to 128 (APNM). His158 acts as the Proton donor/acceptor in catalysis. His159 provides a ligand contact to (S)-2,3,4,5-tetrahydrodipicolinate. Catalysis depends on Lys162, which acts as the Proton donor. 168-169 (GT) provides a ligand contact to (S)-2,3,4,5-tetrahydrodipicolinate.

Belongs to the DapB family.

The protein resides in the cytoplasm. It carries out the reaction (S)-2,3,4,5-tetrahydrodipicolinate + NAD(+) + H2O = (2S,4S)-4-hydroxy-2,3,4,5-tetrahydrodipicolinate + NADH + H(+). It catalyses the reaction (S)-2,3,4,5-tetrahydrodipicolinate + NADP(+) + H2O = (2S,4S)-4-hydroxy-2,3,4,5-tetrahydrodipicolinate + NADPH + H(+). The protein operates within amino-acid biosynthesis; L-lysine biosynthesis via DAP pathway; (S)-tetrahydrodipicolinate from L-aspartate: step 4/4. In terms of biological role, catalyzes the conversion of 4-hydroxy-tetrahydrodipicolinate (HTPA) to tetrahydrodipicolinate. In Shewanella sp. (strain W3-18-1), this protein is 4-hydroxy-tetrahydrodipicolinate reductase.